The sequence spans 461 residues: Probable tubulin polyglutamylase TTLL9 (461 aa).

Residues 1 to 10 (MSRQKNQNSK) are compositionally biased toward polar residues. The interval 1–20 (MSRQKNQNSKGHGVSKGKER) is disordered. Positions 22–402 (QRTLIRFKTT…EARLTGKEKR (381 aa)) constitute a TTL domain. ATP contacts are provided by residues Lys-149 and 155 to 156 (QG). Gln-155 contributes to the a protein binding site. The interval 172 to 208 (RKGTSGKKPTGVETQPARANMNPSGSHDTRSSDDQKD) is disordered. Basic and acidic residues predominate over residues 198–208 (HDTRSSDDQKD). ATP contacts are provided by residues 218–221 (QRYV) and 231–233 (KFD). L-glutamate is bound at residue Arg-257. 276–277 (TN) serves as a coordination point for ATP. Lys-294 serves as a coordination point for L-glutamate. Asp-348, Glu-361, and Asn-363 together coordinate Mg(2+). L-glutamate is bound at residue Lys-379.

Belongs to the tubulin--tyrosine ligase family. The cofactor is Mg(2+). In terms of tissue distribution, highly expressed in brain and testis. Expressed in heart, kidney and lung. In the brain, expressed in ependymal cilia, cortex, corpus callosum and striatum. In the testis, specifically expressed in the seminiferous tubules.

The protein localises to the cytoplasm. The protein resides in the cytoskeleton. It localises to the cilium basal body. It is found in the flagellum axoneme. The catalysed reaction is (L-glutamyl)(n)-gamma-L-glutamyl-L-glutamyl-[protein] + L-glutamate + ATP = (L-glutamyl)(n+1)-gamma-L-glutamyl-L-glutamyl-[protein] + ADP + phosphate + H(+). Functionally, probable tubulin polyglutamylase that generates side chains of glutamate on the gamma-carboxyl group of specific glutamate residues within the C-terminal tail of target proteins. Similar to TTLL1, may acquire enzymatic activity only in complex with other proteins as it is most likely lacking domains important for autonomous activity. Mediates tubulin polyglutamylation which induces establishment of microtubule heterogeneity in sperm flagella, thereby playing a role in normal motile flagella axoneme structure and sperm flagella beating pattern. This is Probable tubulin polyglutamylase TTLL9 from Mus musculus (Mouse).